A 200-amino-acid polypeptide reads, in one-letter code: Oligoribonuclease (200 aa).

The 165-residue stretch at 5–169 folds into the Exonuclease domain; it reads MVWIDCEMTG…ADIRESIAEL (165 aa). Tyr-126 is a catalytic residue.

The protein belongs to the oligoribonuclease family.

It is found in the cytoplasm. 3'-to-5' exoribonuclease specific for small oligoribonucleotides. This Streptomyces avermitilis (strain ATCC 31267 / DSM 46492 / JCM 5070 / NBRC 14893 / NCIMB 12804 / NRRL 8165 / MA-4680) protein is Oligoribonuclease.